The sequence spans 337 residues: MKDRYILAVESSCDETSVAILKNDDVLLTNIIASQVESHKRFGGVVPEVASRHHVEVVTTCFQDALDEAGLEASDIDAVAVTYGPGLVGALLVGIAAAKAFAWANQIPLIPVNHMAGHLMAAREQKELSYPLMALLVSGGHTELVYVPKAGEYHIIGETRDDAVGEAYDKVGRVMGLTYPAGREIDQLAHQGRDTYDFPRAMIKEDHLEFSFSGLKSAFINLHHNAQQKGENLVLEDLCASFQAAVLDILLAKTKKALAKYPVNMLVVAGGVAANQGLRERLASDITETEVVIPPLRLCGDNAGMIALAAAIEYEKHHFAGWDLNAIPSLAFPNYKE.

Fe cation contacts are provided by H114 and H118. Substrate is bound by residues 136 to 140 (LVSGG), D169, G182, D186, and N275. D301 lines the Fe cation pocket.

The protein belongs to the KAE1 / TsaD family. Fe(2+) is required as a cofactor.

The protein localises to the cytoplasm. The enzyme catalyses L-threonylcarbamoyladenylate + adenosine(37) in tRNA = N(6)-L-threonylcarbamoyladenosine(37) in tRNA + AMP + H(+). Its function is as follows. Required for the formation of a threonylcarbamoyl group on adenosine at position 37 (t(6)A37) in tRNAs that read codons beginning with adenine. Is involved in the transfer of the threonylcarbamoyl moiety of threonylcarbamoyl-AMP (TC-AMP) to the N6 group of A37, together with TsaE and TsaB. TsaD likely plays a direct catalytic role in this reaction. The chain is tRNA N6-adenosine threonylcarbamoyltransferase from Streptococcus uberis (strain ATCC BAA-854 / 0140J).